The following is a 264-amino-acid chain: Exodeoxyribonuclease YycJ (264 aa).

Residues histidine 58, histidine 60, aspartate 62, histidine 63, and aspartate 145 each coordinate a divalent metal cation.

The protein belongs to the metallo-beta-lactamase superfamily. Fe(2+) is required as a cofactor. It depends on Zn(2+) as a cofactor. Mn(2+) serves as cofactor.

Its function is as follows. 5'-&gt;3' double-stranded DNA exonuclease. May play a role in mutation mismatch repair (MMR). Required for accurate coordination of cell division with DNA replication. May play a role in cell wall metabolism. This is Exodeoxyribonuclease YycJ from Bacillus anthracis.